Consider the following 377-residue polypeptide: DAR GTPase 2, mitochondrial (377 aa).

The transit peptide at 1–21 (MATAKTWKIAREIGDAVIKAS) directs the protein to the mitochondrion. Positions 34–211 (AAAVRAISER…VLDTPGIFPP (178 aa)) constitute a CP-type G domain. Positions 55 to 59 (DARIP) match the DARXP motif motif. GTP-binding positions include 82-85 (NKME), 110-111 (NS), 150-155 (NVGKSA), and Gly207.

The protein belongs to the TRAFAC class YlqF/YawG GTPase family. MTG1 subfamily.

The protein resides in the mitochondrion. Its function is as follows. GTPase that may function in mitochondrial ribosome assembly. The chain is DAR GTPase 2, mitochondrial from Arabidopsis thaliana (Mouse-ear cress).